We begin with the raw amino-acid sequence, 600 residues long: Netrin-1 (600 aa).

The signal sequence occupies residues 1 to 24 (MMRAMWEALAALAAVSCLVGAVRG). The 238-residue stretch at 47 to 284 (HPRRCIPDFV…AVSDLQVGGR (238 aa)) folds into the Laminin N-terminal domain. N-linked (GlcNAc...) asparagine glycans are attached at residues N95, N116, and N131. 14 disulfides stabilise this stretch: C119/C152, C285/C294, C287/C304, C306/C315, C318/C338, C341/C350, C343/C368, C371/C380, C383/C401, C404/C416, C406/C423, C425/C434, C437/C451, and C472/C544. Laminin EGF-like domains lie at 285-340 (CKCN…ECVA), 341-403 (CNCN…ACKA), and 404-453 (CDCH…PCIK). N417 carries an N-linked (GlcNAc...) asparagine glycan. The region spanning 472 to 600 (CDSYCKASKG…KFQQREKKEL (129 aa)) is the NTR domain. The Cell attachment site signature appears at 530-532 (RGD).

As to quaternary structure, binds to its receptors; DCC, UNC5A, UNC5B, UNC5C and probably UNC5D. Binds to its receptor; DSCAM. Interacts with APP.

It is found in the secreted. The protein resides in the cytoplasm. Its function is as follows. Netrins control guidance of CNS commissural axons and peripheral motor axons. Its association with either DCC or some UNC5 receptors will lead to axon attraction or repulsion, respectively. Binding to UNC5C might cause dissociation of UNC5C from polymerized TUBB3 in microtubules and thereby lead to increased microtubule dynamics and axon repulsion. Involved in dorsal root ganglion axon projection towards the spinal cord. It also serves as a survival factor via its association with its receptors which prevent the initiation of apoptosis. Involved in colorectal tumorigenesis by regulating apoptosis. This is Netrin-1 (NTN1) from Sus scrofa (Pig).